We begin with the raw amino-acid sequence, 190 residues long: Transcription antitermination protein NusB (190 aa).

The interval 135–190 (APAPESVAEEADEESSDSAAAASEPTDEGDVSDSPDSSGASDEPAAPSAEIQPTVD) is disordered. Residues 141-150 (VAEEADEESS) show a composition bias toward acidic residues.

Belongs to the NusB family.

Its function is as follows. Involved in transcription antitermination. Required for transcription of ribosomal RNA (rRNA) genes. Binds specifically to the boxA antiterminator sequence of the ribosomal RNA (rrn) operons. The polypeptide is Transcription antitermination protein NusB (Bifidobacterium longum (strain DJO10A)).